The sequence spans 487 residues: N-succinylglutamate 5-semialdehyde dehydrogenase (487 aa).

Residue 221-226 (GSSRTG) coordinates NAD(+). Catalysis depends on residues glutamate 244 and cysteine 278.

Belongs to the aldehyde dehydrogenase family. AstD subfamily.

It carries out the reaction N-succinyl-L-glutamate 5-semialdehyde + NAD(+) + H2O = N-succinyl-L-glutamate + NADH + 2 H(+). It functions in the pathway amino-acid degradation; L-arginine degradation via AST pathway; L-glutamate and succinate from L-arginine: step 4/5. Functionally, catalyzes the NAD-dependent reduction of succinylglutamate semialdehyde into succinylglutamate. This Pseudomonas putida (strain W619) protein is N-succinylglutamate 5-semialdehyde dehydrogenase.